Consider the following 867-residue polypeptide: Probable alpha,alpha-trehalose-phosphate synthase [UDP-forming] 9 (867 aa).

S5 is modified (phosphoserine). T32 carries the post-translational modification Phosphothreonine. The tract at residues 59 to 546 (ERKIIVANML…AKSFMQDLER (488 aa)) is glycosyltransferase.

This sequence in the N-terminal section; belongs to the glycosyltransferase 20 family. It in the C-terminal section; belongs to the trehalose phosphatase family.

The enzyme catalyses D-glucose 6-phosphate + UDP-alpha-D-glucose = alpha,alpha-trehalose 6-phosphate + UDP + H(+). The sequence is that of Probable alpha,alpha-trehalose-phosphate synthase [UDP-forming] 9 (TPS9) from Arabidopsis thaliana (Mouse-ear cress).